Consider the following 970-residue polypeptide: Rho GTPase-activating protein gacK (970 aa).

A signal peptide spans 1 to 20 (MTLVYEKSSFVLIMAQIAEA). Disordered stretches follow at residues 30–49 (SNDL…SAAI), 258–285 (STCS…INQN), 312–446 (EITI…FSPT), 487–550 (STSN…NNNN), and 860–886 (TASS…NDDP). 2 stretches are compositionally biased toward low complexity: residues 35–49 (STSA…SAAI) and 258–269 (STCSLSSNASNN). The span at 321–333 (IPLPPQSSSPPPT) shows a compositional bias: pro residues. A compositionally biased stretch (low complexity) spans 334 to 383 (RNNQSSPSPSSPQQQNIMPTPPSTSLTPPQSPTLSPSSSTHSTPTQTTTT). Residues 392–406 (PSTISQNNARKTQIP) show a composition bias toward polar residues. The segment covering 407 to 426 (TTTTTTTTTTTTTSTTSTTS) has biased composition (low complexity). Residues 427–446 (PNPVVNNKNLNTPSSSFSPT) are compositionally biased toward polar residues. The 217-residue stretch at 754–970 (IEDSELVEDN…LELIQFNKSL (217 aa)) folds into the Rho-GAP domain. Positions 860–885 (TASSAATANSSSSGSGNGNSSPNNDD) are enriched in low complexity.

It is found in the cytoplasm. In terms of biological role, rho GTPase-activating protein involved in the signal transduction pathway. The chain is Rho GTPase-activating protein gacK (gacK) from Dictyostelium discoideum (Social amoeba).